The sequence spans 147 residues: Hemoglobin subunit epsilon-M (147 aa).

One can recognise a Globin domain in the interval 3–147; that stretch reads HFTPEDKTNI…VSSALGHKYH (145 aa). 2 positions are modified to phosphoserine: Ser-14 and Ser-51. Heme b contacts are provided by His-64 and His-93.

The protein belongs to the globin family. Red blood cells.

Hemoglobin epsilon chain is a beta-type chain found in early embryos. This Didelphis virginiana (North American opossum) protein is Hemoglobin subunit epsilon-M (HBE1).